Consider the following 262-residue polypeptide: uncharacterized protein (262 aa).

The protein belongs to the AB hydrolase superfamily. AB hydrolase 2 family.

This is an uncharacterized protein from Mycosarcoma maydis (Corn smut fungus).